Consider the following 337-residue polypeptide: Diacylglycerol acyltransferase/mycolyltransferase Ag85A (337 aa).

The signal sequence occupies residues 1–42 (MKLVDRFRGAATGTSRRLMVGAVGAALLSGLVGFVGGSATAS). 85 to 86 (MR) is a binding site for substrate. The fibronectin-binding stretch occupies residues 101-111 (FEWYYQSGISV). A disulfide bridge links Cys130 with Cys135. Residues Ser169 and Asp197 each contribute to the substrate site. The active-site Nucleophile is Ser169. The active site involves Glu273. Residues 275–278 (FVRT), Lys282, and 305–307 (HSW) each bind substrate. The active site involves His305.

It belongs to the mycobacterial A85 antigen family. As to quaternary structure, homodimer.

The protein resides in the secreted. Its subcellular location is the cell wall. The protein localises to the cytoplasm. It carries out the reaction an acyl-CoA + a 1,2-diacyl-sn-glycerol = a triacyl-sn-glycerol + CoA. It catalyses the reaction 2 alpha,alpha'-trehalose 6-mycolate = alpha,alpha'-trehalose 6,6'-bismycolate + alpha,alpha-trehalose. In terms of biological role, the antigen 85 proteins (FbpA, FbpB, FbpC) are responsible for the high affinity of mycobacteria for fibronectin, a large adhesive glycoprotein, which facilitates the attachment of M.tuberculosis to murine alveolar macrophages (AMs). They also help to maintain the integrity of the cell wall by catalyzing the transfer of mycolic acids to cell wall arabinogalactan, and through the synthesis of alpha,alpha-trehalose dimycolate (TDM, cord factor). They catalyze the transfer of a mycoloyl residue from one molecule of alpha,alpha-trehalose monomycolate (TMM) to another TMM, leading to the formation of TDM. FbpA mediates triacylglycerol (TAG) formation with long-chain acyl-CoA as the acyl donor and 1,2-dipalmitoyl-sn-glycerol (1,2-dipalmitin) as the acyl acceptor. It has a preference for C26:0-CoA over C18:1-CoA. The chain is Diacylglycerol acyltransferase/mycolyltransferase Ag85A (fbpA) from Mycobacterium ulcerans.